The primary structure comprises 142 residues: Sorting nexin-3 (142 aa).

A PX domain is found at 21–138 (NFLEIEVRNP…ASFIQDPNWD (118 aa)). A 1,2-diacyl-sn-glycero-3-phospho-(1D-myo-inositol-3-phosphate) contacts are provided by arginine 64, serine 66, lysine 90, arginine 95, and arginine 104.

This sequence belongs to the sorting nexin family.

Its subcellular location is the cytoplasm. The protein localises to the golgi apparatus membrane. It localises to the prevacuolar compartment membrane. Functionally, required for retention of late Golgi membrane proteins. Component of the retrieval machinery that functions by direct interaction with the cytosolic tails of certain TGN membrane proteins during the sorting/budding process at the prevacuolar compartment. Binds phosphatidylinositol 3-phosphate (PtdIns(P3)). This chain is Sorting nexin-3 (snx3), found in Aspergillus fumigatus (strain ATCC MYA-4609 / CBS 101355 / FGSC A1100 / Af293) (Neosartorya fumigata).